The chain runs to 190 residues: Dual-action ribosomal maturation protein DarP (190 aa).

Positions 1-31 (MIHADHDDNLPDDEEGLPLPPSKSQRKRDMH) are disordered.

This sequence belongs to the DarP family.

The protein resides in the cytoplasm. Its function is as follows. Member of a network of 50S ribosomal subunit biogenesis factors which assembles along the 30S-50S interface, preventing incorrect 23S rRNA structures from forming. Promotes peptidyl transferase center (PTC) maturation. The chain is Dual-action ribosomal maturation protein DarP from Aromatoleum aromaticum (strain DSM 19018 / LMG 30748 / EbN1) (Azoarcus sp. (strain EbN1)).